We begin with the raw amino-acid sequence, 470 residues long: Na(+)-translocating NADH-quinone reductase subunit A (470 aa).

It belongs to the NqrA family. Composed of six subunits; NqrA, NqrB, NqrC, NqrD, NqrE and NqrF.

It catalyses the reaction a ubiquinone + n Na(+)(in) + NADH + H(+) = a ubiquinol + n Na(+)(out) + NAD(+). NQR complex catalyzes the reduction of ubiquinone-1 to ubiquinol by two successive reactions, coupled with the transport of Na(+) ions from the cytoplasm to the periplasm. NqrA to NqrE are probably involved in the second step, the conversion of ubisemiquinone to ubiquinol. The sequence is that of Na(+)-translocating NADH-quinone reductase subunit A from Chlamydia caviae (strain ATCC VR-813 / DSM 19441 / 03DC25 / GPIC) (Chlamydophila caviae).